Consider the following 552-residue polypeptide: Dihydroxy-acid dehydratase (552 aa).

Residue Asp78 coordinates Mg(2+). Cys119 provides a ligand contact to [2Fe-2S] cluster. 2 residues coordinate Mg(2+): Asp120 and Lys121. Lys121 is subject to N6-carboxylysine. Cys191 is a [2Fe-2S] cluster binding site. Residue Glu442 coordinates Mg(2+). Ser468 acts as the Proton acceptor in catalysis.

This sequence belongs to the IlvD/Edd family. Homodimer. Requires [2Fe-2S] cluster as cofactor. Mg(2+) serves as cofactor.

The catalysed reaction is (2R)-2,3-dihydroxy-3-methylbutanoate = 3-methyl-2-oxobutanoate + H2O. It catalyses the reaction (2R,3R)-2,3-dihydroxy-3-methylpentanoate = (S)-3-methyl-2-oxopentanoate + H2O. It participates in amino-acid biosynthesis; L-isoleucine biosynthesis; L-isoleucine from 2-oxobutanoate: step 3/4. It functions in the pathway amino-acid biosynthesis; L-valine biosynthesis; L-valine from pyruvate: step 3/4. In terms of biological role, functions in the biosynthesis of branched-chain amino acids. Catalyzes the dehydration of (2R,3R)-2,3-dihydroxy-3-methylpentanoate (2,3-dihydroxy-3-methylvalerate) into 2-oxo-3-methylpentanoate (2-oxo-3-methylvalerate) and of (2R)-2,3-dihydroxy-3-methylbutanoate (2,3-dihydroxyisovalerate) into 2-oxo-3-methylbutanoate (2-oxoisovalerate), the penultimate precursor to L-isoleucine and L-valine, respectively. This Clostridium botulinum (strain Eklund 17B / Type B) protein is Dihydroxy-acid dehydratase.